The following is a 194-amino-acid chain: Methylthioribulose-1-phosphate dehydratase (194 aa).

2 residues coordinate Zn(2+): His-84 and His-86.

The protein belongs to the aldolase class II family. MtnB subfamily. It depends on Zn(2+) as a cofactor.

The enzyme catalyses 5-(methylsulfanyl)-D-ribulose 1-phosphate = 5-methylsulfanyl-2,3-dioxopentyl phosphate + H2O. The protein operates within amino-acid biosynthesis; L-methionine biosynthesis via salvage pathway; L-methionine from S-methyl-5-thio-alpha-D-ribose 1-phosphate: step 2/6. Catalyzes the dehydration of methylthioribulose-1-phosphate (MTRu-1-P) into 2,3-diketo-5-methylthiopentyl-1-phosphate (DK-MTP-1-P). The polypeptide is Methylthioribulose-1-phosphate dehydratase (Cronobacter sakazakii (Enterobacter sakazakii)).